A 135-amino-acid polypeptide reads, in one-letter code: Transcription antitermination protein NusB (135 aa).

This sequence belongs to the NusB family.

Its function is as follows. Involved in transcription antitermination. Required for transcription of ribosomal RNA (rRNA) genes. Binds specifically to the boxA antiterminator sequence of the ribosomal RNA (rrn) operons. The protein is Transcription antitermination protein NusB of Shewanella piezotolerans (strain WP3 / JCM 13877).